Reading from the N-terminus, the 152-residue chain is Ribosome maturation factor RimP (152 aa).

Belongs to the RimP family.

Its subcellular location is the cytoplasm. Required for maturation of 30S ribosomal subunits. This chain is Ribosome maturation factor RimP, found in Salmonella arizonae (strain ATCC BAA-731 / CDC346-86 / RSK2980).